A 67-amino-acid polypeptide reads, in one-letter code: uncharacterized protein (67 aa).

The protein to E.coli YbdD.

This is an uncharacterized protein from Escherichia coli O157:H7.